The sequence spans 641 residues: Fibrinogen alpha-2 chain (641 aa).

The signal sequence occupies residues 1–23; sequence MTLRGVSMVLTWCLLVSKAWSSG. Positions 107 to 226 form a coiled coil; it reads SVSDVSNQVV…IVHESFSVER (120 aa). The tract at residues 228–327 is disordered; the sequence is DARSLHPYSG…QKTEELSFKK (100 aa). Asn271 carries an N-linked (GlcNAc...) asparagine glycan. The span at 279–289 shows a compositional bias: basic and acidic residues; the sequence is VDERSKVEKDV. The segment covering 293–317 has biased composition (low complexity); that stretch reads STSSVSSSSSSSSSSSSTSSTISST. The 242-residue stretch at 395–636 folds into the Fibrinogen C-terminal domain; it reads RTNLSEYIDC…RTAVRFRRVQ (242 aa). Asn397 is a glycosylation site (N-linked (GlcNAc...) asparagine). Cys404 and Cys435 are disulfide-bonded. Asn458 carries an N-linked (GlcNAc...) asparagine glycan. Cysteines 571 and 584 form a disulfide.

As to quaternary structure, heterohexamer; disulfide linked. Contains 2 sets of 3 non-identical chains (alpha, beta and gamma). The 2 heterotrimers are in head to head conformation with the N-termini in a small central domain. Post-translationally, conversion of fibrinogen to fibrin is triggered by thrombin, which cleaves fibrinopeptides A and B from alpha and beta chains, and thus exposes the N-terminal polymerization sites responsible for the formation of the soft clot. The soft clot is converted into the hard clot by factor XIIIA which catalyzes the epsilon-(gamma-glutamyl)lysine cross-linking between gamma chains (stronger) and between alpha chains (weaker) of different monomers. Forms F13A-mediated cross-links between a glutamine and the epsilon-amino group of a lysine residue, forming fibronectin-fibrinogen heteropolymers.

The protein localises to the secreted. In terms of biological role, fibrinogen has a double function: yielding monomers that polymerize into fibrin and acting as a cofactor in platelet aggregation. This Petromyzon marinus (Sea lamprey) protein is Fibrinogen alpha-2 chain.